The primary structure comprises 146 residues: Large ribosomal subunit protein bL19 (146 aa).

The protein belongs to the bacterial ribosomal protein bL19 family.

Its function is as follows. This protein is located at the 30S-50S ribosomal subunit interface and may play a role in the structure and function of the aminoacyl-tRNA binding site. The sequence is that of Large ribosomal subunit protein bL19 from Bartonella bacilliformis (strain ATCC 35685 / KC583 / Herrer 020/F12,63).